The primary structure comprises 184 residues: Peptide deformylase 2 (184 aa).

Cysteine 110 and histidine 153 together coordinate Fe cation. The active site involves glutamate 154. Histidine 157 contacts Fe cation.

It belongs to the polypeptide deformylase family. It depends on Fe(2+) as a cofactor.

The enzyme catalyses N-terminal N-formyl-L-methionyl-[peptide] + H2O = N-terminal L-methionyl-[peptide] + formate. Its function is as follows. Removes the formyl group from the N-terminal Met of newly synthesized proteins. Requires at least a dipeptide for an efficient rate of reaction. N-terminal L-methionine is a prerequisite for activity but the enzyme has broad specificity at other positions. This is Peptide deformylase 2 from Bacillus anthracis.